Consider the following 651-residue polypeptide: Coronin-like protein (651 aa).

WD repeat units lie at residues 79–110 (GHTA…GIWD), 138–169 (GHAR…KLWN), 180–210 (KHPD…RVWN), and 226–257 (AKNQ…GIWD). Positions 408–609 (APSFHEAKRP…TSPKSLGLKK (202 aa)) are disordered. A compositionally biased stretch (basic and acidic residues) spans 427–451 (LEEKKEQPKVEKPISESEKEVKQEA). Phosphoserine occurs at positions 441, 454, and 456. The span at 452 to 465 (PKSPSPLKSASSSS) shows a compositional bias: low complexity. 2 positions are modified to phosphothreonine: Thr517 and Thr529. Basic and acidic residues-rich tracts occupy residues 523 to 540 (ETKK…ELKP) and 547 to 572 (TDRK…EQEK). Phosphoserine occurs at positions 573 and 579. Over residues 578–590 (SSITAAKTAITAS) the composition is skewed to low complexity. Positions 618–650 (VLQLEDVVDKLTKANLDKDERLLKLEQKIGELS) form a coiled coil.

Belongs to the WD repeat coronin family. Binds to F-actin.

This chain is Coronin-like protein (CRN1), found in Saccharomyces cerevisiae (strain ATCC 204508 / S288c) (Baker's yeast).